The primary structure comprises 118 residues: Large ribosomal subunit protein bL19 (118 aa).

The protein belongs to the bacterial ribosomal protein bL19 family.

This protein is located at the 30S-50S ribosomal subunit interface and may play a role in the structure and function of the aminoacyl-tRNA binding site. The protein is Large ribosomal subunit protein bL19 of Beutenbergia cavernae (strain ATCC BAA-8 / DSM 12333 / CCUG 43141 / JCM 11478 / NBRC 16432 / NCIMB 13614 / HKI 0122).